The following is a 1084-amino-acid chain: TNF receptor-associated factor family protein DDB_G0272098 (1084 aa).

Positions 19–103 (YYCPDCGELL…KNRYYETKNF (85 aa)) constitute an LIM zinc-binding domain. 2 consecutive TRAF-type zinc fingers follow at residues 122–190 (KHIK…IDHE) and 191–248 (IHLS…YNMS). A coiled-coil region spans residues 265–321 (IEEQNQDIKELHNFIENHLSKKFIDLDTIVNIQKYLIKNKNQKISQLTEIIKRVDNS). Disordered stretches follow at residues 348-392 (YKNS…NINE), 490-523 (IRQQQQQQQQQQQQQQQQQQQPPPTPLPPQNTTI), 537-656 (NNNI…KDGL), and 709-897 (SIVE…NDDD). Low complexity-rich tracts occupy residues 349 to 375 (KNSNSNNNNNNKNTNENENTNENTNEN), 492 to 509 (QQQQQQQQQQQQQQQQQQ), 537 to 549 (NNNINENNNNNNK), and 556 to 570 (ITAATATNNSNTTST). The stretch at 489 to 553 (LIRQQQQQQQ…NNNNNKNNDD (65 aa)) forms a coiled coil. Residues 571-586 (HTILNGTNNEASMTDI) show a composition bias toward polar residues. Over residues 587 to 637 (NETTSTTTTAETTEATASESTEESNNTAETTTTTTTTTTTITTAAETVNST) the composition is skewed to low complexity. Positions 644–656 (TSEKVEEKGKDGL) are enriched in basic and acidic residues. The stretch at 735 to 852 (NGNENENENE…NNNNNNNENV (118 aa)) forms a coiled coil. A compositionally biased stretch (acidic residues) spans 739–757 (NENENENENENENENENEN). The segment covering 774 to 785 (SNINTSNDTEPT) has biased composition (polar residues). A compositionally biased stretch (basic and acidic residues) spans 790 to 799 (EDIKKNKENE). The span at 809-849 (NNNIKSVEDTNNNNNNNNNNNNNNNNNNNNNNNNNNNNNNN) shows a compositional bias: low complexity. 2 stretches are compositionally biased toward basic and acidic residues: residues 853–864 (YDIKKDRNRENV) and 875–892 (ENGKINDNGDVKMGSEDK). Residues 909-1042 (IFRNQILFKD…DNCFIVNLEV (134 aa)) form the MATH domain. The tract at residues 1056-1084 (LLQKSSPPAATTTTTTSSSSSKTTPKTKR) is disordered. Residues 1059 to 1084 (KSSPPAATTTTTTSSSSSKTTPKTKR) are compositionally biased toward low complexity.

It belongs to the TNF receptor-associated factor family.

It localises to the cytoplasm. Functionally, probable adapter protein and signal transducer that links members of the tumor necrosis factor receptor family to different signaling pathways by association with the receptor cytoplasmic domain and kinases. The chain is TNF receptor-associated factor family protein DDB_G0272098 from Dictyostelium discoideum (Social amoeba).